The sequence spans 154 residues: NADPH-dependent 7-cyano-7-deazaguanine reductase (154 aa).

C52 acts as the Thioimide intermediate in catalysis. D59 functions as the Proton donor in the catalytic mechanism. Residues 74–76 (VES) and 93–94 (HE) contribute to the substrate site.

The protein belongs to the GTP cyclohydrolase I family. QueF type 1 subfamily.

It localises to the cytoplasm. The catalysed reaction is 7-aminomethyl-7-carbaguanine + 2 NADP(+) = 7-cyano-7-deazaguanine + 2 NADPH + 3 H(+). It participates in tRNA modification; tRNA-queuosine biosynthesis. Its function is as follows. Catalyzes the NADPH-dependent reduction of 7-cyano-7-deazaguanine (preQ0) to 7-aminomethyl-7-deazaguanine (preQ1). The polypeptide is NADPH-dependent 7-cyano-7-deazaguanine reductase (Ruegeria sp. (strain TM1040) (Silicibacter sp.)).